Here is a 341-residue protein sequence, read N- to C-terminus: Protein huluwa (341 aa).

The Extracellular segment spans residues 1–36 (MVTLSPAYLPSDGGTQAASAAPSVEENWVVQPSLTL). The chain crosses the membrane as a helical span at residues 37–57 (LVLLLVPCVLLLFFLNCFLLF). The Cytoplasmic segment spans residues 58–341 (HRLPAFSLRK…PMMCSKQYWI (284 aa)). Residues 206 to 211 (VPPNTP) carry the VPPNSP motif motif.

It belongs to the huluwa family. As to quaternary structure, interacts with axin1; leading to promote the tankyrase-mediated degradation of axin. Interacts with axin2; leading to promote the tankyrase-mediated degradation of axin.

The protein resides in the cell membrane. In terms of biological role, key maternal determinant of the dorsal organizer and body axis formation in vertebrates that acts by promoting stabilization of beta-catenin (ctnnb1). Localizes on the plasma membrane of the future dorsal blastomeres in early blastulas and binds to and promotes the tankyrase-mediated degradation of axin (axin1 and axin2). Axin degradation results in stabilization and nuclear translocation of beta-catenin (ctnnb1) for activating organizer-specific target gene expression. The chain is Protein huluwa from Xenopus laevis (African clawed frog).